Consider the following 120-residue polypeptide: UPF0102 protein PTH_1707 (120 aa).

This sequence belongs to the UPF0102 family.

This Pelotomaculum thermopropionicum (strain DSM 13744 / JCM 10971 / SI) protein is UPF0102 protein PTH_1707.